We begin with the raw amino-acid sequence, 27 residues long: Cupiennin-4b (27 aa).

Q27 carries the glutamine amide modification.

Expressed by the venom gland.

It localises to the secreted. In Cupiennius salei (American wandering spider), this protein is Cupiennin-4b.